A 101-amino-acid chain; its full sequence is Apolipoprotein C-II (101 aa).

The N-terminal stretch at 1–22 (MGTRFLLALCLVLLVLGFEVQG) is a signal peptide. Residues 23-28 (AQLPQQ) constitute a propeptide, removed in mature form. The segment at 66 to 74 (AVDEKLRDL) is lipid binding. The tract at residues 78 to 101 (STAAMSTYTGIFTDQVLSVLKGEE) is lipoprotein lipase cofactor.

It belongs to the apolipoprotein C2 family. Proapolipoprotein C-II is synthesized as a sialic acid containing glycoprotein which is subsequently desialylated prior to its proteolytic processing. Post-translationally, proapolipoprotein C-II, the major form found in plasma undergoes proteolytic cleavage of its N-terminal hexapeptide to generate apolipoprotein C-II, which occurs as the minor form in plasma.

The protein localises to the secreted. In terms of biological role, component of chylomicrons, very low-density lipoproteins (VLDL), low-density lipoproteins (LDL), and high-density lipoproteins (HDL) in plasma. Plays an important role in lipoprotein metabolism as an activator of lipoprotein lipase. Both proapolipoprotein C-II and apolipoprotein C-II can activate lipoprotein lipase. The polypeptide is Apolipoprotein C-II (APOC2) (Papio anubis (Olive baboon)).